The chain runs to 157 residues: Nascent polypeptide-associated complex subunit alpha (157 aa).

The region spanning 6 to 71 (TTDESHIHKT…LGSPVNLHQL (66 aa)) is the NAC-A/B domain. The segment covering 81 to 107 (SSKDQEGPGLYDEIHSDPQEDGVKEAE) has biased composition (basic and acidic residues). The interval 81–116 (SSKDQEGPGLYDEIHSDPQEDGVKEAEEITVDPSDE) is disordered. Positions 118–157 (LSEEDIKLISSQVKASRNDIIKALVESEYDVVDAMMKLTK) constitute a UBA domain.

This sequence belongs to the NAC-alpha family.

The protein localises to the cytoplasm. The protein resides in the nucleus. Its function is as follows. May be involved in mitochondrial protein import by enhancing productive ribosome interactions with the outer mitochondrial membrane and blocks the inappropriate interaction of ribosomes translating non-secretory nascent polypeptides with translocation sites in the membrane of the endoplasmic reticulum. EGD2 may also be involved in transcription regulation. In Encephalitozoon cuniculi (strain GB-M1) (Microsporidian parasite), this protein is Nascent polypeptide-associated complex subunit alpha (EGD2).